We begin with the raw amino-acid sequence, 103 residues long: Large ribosomal subunit protein bL25 (103 aa).

This sequence belongs to the bacterial ribosomal protein bL25 family. Part of the 50S ribosomal subunit; part of the 5S rRNA/L5/L18/L25 subcomplex. Contacts the 5S rRNA. Binds to the 5S rRNA independently of L5 and L18.

Its function is as follows. This is one of the proteins that binds to the 5S RNA in the ribosome where it forms part of the central protuberance. This chain is Large ribosomal subunit protein bL25, found in Blochmanniella floridana.